A 218-amino-acid polypeptide reads, in one-letter code: Transmembrane gamma-carboxyglutamic acid protein 1 (218 aa).

Positions 1–20 (MGRVFLTGEKANSILKRYPR) are excised as a propeptide. A Gla domain is found at 21–66 (ANGFFEEIRQGNIERECKEEFCTFEEAREAFENNEKTKEFWSTYTK). Over 21 to 83 (ANGFFEEIRQ…RGSDWFQFYL (63 aa)) the chain is Extracellular. A disulfide bridge connects residues Cys37 and Cys42. Residues 84 to 106 (TFPLIFGLFIILLVIFLIWRCFL) traverse the membrane as a helical segment. The Cytoplasmic segment spans residues 107-218 (RNKTRRQTVT…PMVPVVTTIK (112 aa)). A disordered region spans residues 161–195 (TRLSNCDPPPTYEEATGQVNLQRSETEPHLDPPPE).

Gla residues are produced after subsequent post-translational modifications of glutamate by a vitamin K-dependent gamma-carboxylase. As to expression, highly expressed in the spinal cord.

Its subcellular location is the membrane. The chain is Transmembrane gamma-carboxyglutamic acid protein 1 (PRRG1) from Homo sapiens (Human).